Reading from the N-terminus, the 250-residue chain is Triosephosphate isomerase, glycosomal (250 aa).

Residues Asn-11 and Lys-13 each contribute to the substrate site. Residue His-95 is the Electrophile of the active site. The active-site Proton acceptor is the Glu-167.

This sequence belongs to the triosephosphate isomerase family. As to quaternary structure, homodimer.

It localises to the glycosome. It carries out the reaction D-glyceraldehyde 3-phosphate = dihydroxyacetone phosphate. The protein operates within carbohydrate biosynthesis; gluconeogenesis. Its pathway is carbohydrate degradation; glycolysis; D-glyceraldehyde 3-phosphate from glycerone phosphate: step 1/1. In Trypanosoma brucei brucei, this protein is Triosephosphate isomerase, glycosomal.